The following is a 247-amino-acid chain: ATP synthase subunit a, chloroplastic (247 aa).

Transmembrane regions (helical) follow at residues 38 to 58, 95 to 115, 134 to 154, 199 to 219, and 220 to 240; these read QVLITSWVVIAILLGSAAIAV, VPFIGTMFLFIFVSNWSGALL, INTTVALALPTSVAYFYAGLT, LVVVVLVSLVPSVVPIPVMFL, and GLFTSSIQALIFATLAAAYIG.

Belongs to the ATPase A chain family. As to quaternary structure, F-type ATPases have 2 components, CF(1) - the catalytic core - and CF(0) - the membrane proton channel. CF(1) has five subunits: alpha(3), beta(3), gamma(1), delta(1), epsilon(1). CF(0) has four main subunits: a, b, b' and c.

The protein localises to the plastid. The protein resides in the chloroplast thylakoid membrane. Key component of the proton channel; it plays a direct role in the translocation of protons across the membrane. The chain is ATP synthase subunit a, chloroplastic from Illicium oligandrum (Star anise).